The primary structure comprises 973 residues: 109 kDa U5 small nuclear ribonucleoprotein component GFL (973 aa).

The tract at residues 1–40 is disordered; that stretch reads MDGSLYGECGNYIGPEIESDRDSDDSVEDEDLQEPGGSNG. Positions 17 to 33 are enriched in acidic residues; sequence IESDRDSDDSVEDEDLQ. The 287-residue stretch at 122 to 408 folds into the tr-type G domain; the sequence is ALVRNVALVG…LGVTLSNSAY (287 aa). The G1 stretch occupies residues 131 to 138; the sequence is GHLQHGKT. Position 131–138 (131–138) interacts with GTP; that stretch reads GHLQHGKT. The G2 stretch occupies residues 175–179; sequence NISIK. The tract at residues 201-204 is G3; that stretch reads DTPG. Residues 201 to 205 and 255 to 258 each bind GTP; these read DTPGN and NKVD. Residues 255–258 are G4; the sequence is NKVD. Residues 381 to 383 are G5; sequence YSQ.

The protein belongs to the TRAFAC class translation factor GTPase superfamily. Classic translation factor GTPase family. In terms of tissue distribution, expressed in flower buds, open flowers and siliques. Expressed at low levels in rosettes leaves, cauline leaves and stems.

The protein localises to the nucleus speckle. Its function is as follows. Splicing factor involved in pre-mRNA splicing and component of the spliceosome. This chain is 109 kDa U5 small nuclear ribonucleoprotein component GFL, found in Arabidopsis thaliana (Mouse-ear cress).